Consider the following 75-residue polypeptide: DNA-directed RNA polymerase subunit Rpo6 (75 aa).

It belongs to the archaeal Rpo6/eukaryotic RPB6 RNA polymerase subunit family. As to quaternary structure, part of the RNA polymerase complex.

Its subcellular location is the cytoplasm. The catalysed reaction is RNA(n) + a ribonucleoside 5'-triphosphate = RNA(n+1) + diphosphate. DNA-dependent RNA polymerase (RNAP) catalyzes the transcription of DNA into RNA using the four ribonucleoside triphosphates as substrates. In Archaeoglobus fulgidus (strain ATCC 49558 / DSM 4304 / JCM 9628 / NBRC 100126 / VC-16), this protein is DNA-directed RNA polymerase subunit Rpo6.